The primary structure comprises 323 residues: Germacrene A synthase (323 aa).

Mg(2+) contacts are provided by D82, D86, N222, S226, and E230. A DDXXD motif motif is present at residues 82 to 86 (DDQCD).

Belongs to the terpene synthase family. It depends on Mg(2+) as a cofactor.

The enzyme catalyses (2E,6E)-farnesyl diphosphate = 5-epi-alpha-selinene + diphosphate. Functionally, catalyzes the cyclization of farnesyl diphosphate (FPP) to the sesquiterpene germacrene A. In Nostoc punctiforme (strain ATCC 29133 / PCC 73102), this protein is Germacrene A synthase.